The chain runs to 56 residues: Small ribosomal subunit protein uS14 (56 aa).

Cys21, Cys24, Cys39, and Cys42 together coordinate Zn(2+).

This sequence belongs to the universal ribosomal protein uS14 family. Component of the small ribosomal subunit (SSU). Mature N.crassa ribosomes consist of a small (40S) and a large (60S) subunit. The 40S small subunit contains 1 molecule of ribosomal RNA (18S rRNA) and at least 32 different proteins. The large 60S subunit contains 3 rRNA molecules (26S, 5.8S and 5S rRNA) and at least 42 different proteins. The cofactor is Zn(2+).

The protein localises to the cytoplasm. Component of the ribosome, a large ribonucleoprotein complex responsible for the synthesis of proteins in the cell. The small ribosomal subunit (SSU) binds messenger RNAs (mRNAs) and translates the encoded message by selecting cognate aminoacyl-transfer RNA (tRNA) molecules. The large subunit (LSU) contains the ribosomal catalytic site termed the peptidyl transferase center (PTC), which catalyzes the formation of peptide bonds, thereby polymerizing the amino acids delivered by tRNAs into a polypeptide chain. The nascent polypeptides leave the ribosome through a tunnel in the LSU and interact with protein factors that function in enzymatic processing, targeting, and the membrane insertion of nascent chains at the exit of the ribosomal tunnel. The sequence is that of Small ribosomal subunit protein uS14 (rps-29) from Neurospora crassa (strain ATCC 24698 / 74-OR23-1A / CBS 708.71 / DSM 1257 / FGSC 987).